The following is a 506-amino-acid chain: NAD(P)H-quinone oxidoreductase subunit 2 (506 aa).

13 helical membrane-spanning segments follow: residues 14–34 (AIIP…VDLA), 42–62 (WAPI…ALQW), 79–99 (LAIA…LISW), 108–128 (PIGE…LLCG), 132–152 (LISI…LSGY), 167–187 (LLVG…LYGL), 206–226 (FITS…IAAV), 240–260 (PTPV…AFAI), 276–296 (LLFT…ALAQ), 302–322 (MLAY…VSGT), 330–350 (VLYL…VILF), 374–394 (LGLS…GFFG), and 409–429 (LLVI…ISVI).

This sequence belongs to the complex I subunit 2 family. NDH-1 can be composed of about 15 different subunits; different subcomplexes with different compositions have been identified which probably have different functions.

Its subcellular location is the cellular thylakoid membrane. The catalysed reaction is a plastoquinone + NADH + (n+1) H(+)(in) = a plastoquinol + NAD(+) + n H(+)(out). The enzyme catalyses a plastoquinone + NADPH + (n+1) H(+)(in) = a plastoquinol + NADP(+) + n H(+)(out). NDH-1 shuttles electrons from an unknown electron donor, via FMN and iron-sulfur (Fe-S) centers, to quinones in the respiratory and/or the photosynthetic chain. The immediate electron acceptor for the enzyme in this species is believed to be plastoquinone. Couples the redox reaction to proton translocation, and thus conserves the redox energy in a proton gradient. Cyanobacterial NDH-1 also plays a role in inorganic carbon-concentration. This chain is NAD(P)H-quinone oxidoreductase subunit 2, found in Prochlorococcus marinus (strain MIT 9312).